Consider the following 123-residue polypeptide: Small ribosomal subunit protein uS12cz/uS12cy (123 aa).

This sequence belongs to the universal ribosomal protein uS12 family. In terms of assembly, part of the 30S ribosomal subunit.

It localises to the plastid. The protein resides in the chloroplast. In terms of biological role, with S4 and S5 plays an important role in translational accuracy. Located at the interface of the 30S and 50S subunits. This is Small ribosomal subunit protein uS12cz/uS12cy (rps12-A) from Cucumis sativus (Cucumber).